A 65-amino-acid polypeptide reads, in one-letter code: EHGYLLNKYTGCKVWCVINNEECGYLCNKRRGGYYGYCYFWKLACYCQGARKSELWNYKTNKCDL.

Positions 1-64 (EHGYLLNKYT…LWNYKTNKCD (64 aa)) constitute an LCN-type CS-alpha/beta domain. Cystine bridges form between cysteine 12/cysteine 63, cysteine 16/cysteine 38, cysteine 23/cysteine 45, and cysteine 27/cysteine 47.

The protein belongs to the long (4 C-C) scorpion toxin superfamily. Sodium channel inhibitor family. In terms of tissue distribution, expressed by the venom gland.

It is found in the secreted. Has a toxic effect on insects and mammals and is capable of competing with anti-insect scorpion toxins for binding to the sodium channel (Nav) of insects. It also modulates the binding of alpha-type and beta-type anti-mammal scorpion toxins to the mammal sodium channel. It may act on both site 3 and site 4 of voltage-gated sodium channels. The sequence is that of Toxin AaHIT4 from Androctonus australis (Sahara scorpion).